We begin with the raw amino-acid sequence, 613 residues long: Zinc metalloproteinase-disintegrin-like MTP4 (613 aa).

The N-terminal stretch at 1-20 (MIEVLLVTICFTVFPYQGSS) is a signal peptide. A propeptide spanning residues 21-191 (IILESGNVND…DEPIEKISQL (171 aa)) is cleaved from the precursor. One can recognise a Peptidase M12B domain in the interval 205–401 (KYIELYVVVD…VRPQCILNKP (197 aa)). Glu-208 serves as a coordination point for Ca(2+). N-linked (GlcNAc...) asparagine glycosylation is present at Asn-282. Residue Asp-292 participates in Ca(2+) binding. Intrachain disulfides connect Cys-316–Cys-396, Cys-356–Cys-380, and Cys-358–Cys-363. Residues His-341, His-345, and His-351 each contribute to the Zn(2+) site. Ca(2+)-binding residues include Cys-396, Asn-399, Asn-414, Phe-416, Glu-418, Glu-421, and Asp-424. In terms of domain architecture, Disintegrin spans 409 to 495 (PPVCGNYFVE…KCPTDSFQRN (87 aa)). Disulfide bonds link Cys-412–Cys-441, Cys-423–Cys-436, Cys-425–Cys-431, Cys-435–Cys-458, Cys-449–Cys-455, Cys-454–Cys-480, Cys-467–Cys-487, Cys-474–Cys-506, Cys-499–Cys-511, Cys-518–Cys-568, Cys-533–Cys-575, Cys-543–Cys-577, Cys-546–Cys-556, Cys-563–Cys-601, and Cys-595–Cys-606. A glycan (N-linked (GlcNAc...) asparagine) is linked at Asn-437. The short motif at 473 to 475 (DCD) is the D/ECD-tripeptide element. Residues Asp-475, Leu-476, Glu-478, and Asp-490 each contribute to the Ca(2+) site. The interval 561-574 (KMCGKLLCEKGNAT) is hypervariable region that may play important roles toward cell migration. A glycan (N-linked (GlcNAc...) asparagine) is linked at Asn-572.

This sequence belongs to the venom metalloproteinase (M12B) family. P-III subfamily. As to quaternary structure, monomer. The cofactor is Zn(2+). As to expression, expressed by the venom gland.

The protein localises to the secreted. In terms of biological role, snake venom zinc metalloproteinase that may impair hemostasis in the prey. This chain is Zinc metalloproteinase-disintegrin-like MTP4, found in Drysdalia coronoides (White-lipped snake).